A 1082-amino-acid polypeptide reads, in one-letter code: Probable arabinosyltransferase B (1082 aa).

The next 13 helical transmembrane spans lie at 28–50 (WVATIAGLLGFVLSVSIPLLPVT), 223–241 (LAAMLLAIVSTVIALLALW), 262–281 (VTAVDGVVVGGMAIWYVIGA), 333–352 (SIWIRLPDLICALICWLLLS), 359–381 (LGPAVAGSRAAMWAAGLVLLGAW), 420–442 (AITTAAFTLGIQPTGLIAVAALL), 462–481 (WPLIAPLLAAGTVILAVVFA), 522–544 (AISRRVAFVFTAMCLFPSLFMML), 557–574 (AWRLMGIIFATMFFLMFT), 578–600 (WTHHFGLFAAVGGAMAALATVLV), 613–635 (AFLSLVLFVLAFCFASTNGWWYV), 650–672 (GGVQISAIFFALSAIAALWAFWL), and 689–711 (APIPVAAGFMVVVMMASMAIGVV).

The protein belongs to the emb family.

The protein localises to the cell membrane. Functionally, arabinosyl transferase responsible for the polymerization of arabinose into the arabinan of arabinogalactan. This is Probable arabinosyltransferase B (embB) from Mycolicibacterium smegmatis (Mycobacterium smegmatis).